A 507-amino-acid chain; its full sequence is Histidine ammonia-lyase (507 aa).

The 5-imidazolinone (Ala-Gly) cross-link spans 142-144; it reads ASG. 2,3-didehydroalanine (Ser) is present on serine 143.

It belongs to the PAL/histidase family. Post-translationally, contains an active site 4-methylidene-imidazol-5-one (MIO), which is formed autocatalytically by cyclization and dehydration of residues Ala-Ser-Gly.

The protein localises to the cytoplasm. It catalyses the reaction L-histidine = trans-urocanate + NH4(+). The protein operates within amino-acid degradation; L-histidine degradation into L-glutamate; N-formimidoyl-L-glutamate from L-histidine: step 1/3. The polypeptide is Histidine ammonia-lyase (Symbiobacterium thermophilum (strain DSM 24528 / JCM 14929 / IAM 14863 / T)).